A 63-amino-acid polypeptide reads, in one-letter code: DNA gyrase inhibitor YacG (63 aa).

Positions 9, 12, 28, and 32 each coordinate Zn(2+).

The protein belongs to the DNA gyrase inhibitor YacG family. In terms of assembly, interacts with GyrB. Requires Zn(2+) as cofactor.

Its function is as follows. Inhibits all the catalytic activities of DNA gyrase by preventing its interaction with DNA. Acts by binding directly to the C-terminal domain of GyrB, which probably disrupts DNA binding by the gyrase. The sequence is that of DNA gyrase inhibitor YacG from Salmonella paratyphi A (strain AKU_12601).